The primary structure comprises 434 residues: Bestrophin homolog 12 (434 aa).

4 helical membrane-spanning segments follow: residues 31-51 (KVIL…FLVF), 76-96 (VCIP…DQWE), 244-264 (IPIP…YFFF), and 278-298 (WALS…FLVG).

The protein belongs to the anion channel-forming bestrophin (TC 1.A.46) family. Calcium-sensitive chloride channel subfamily. Forms oligomers.

It is found in the cell membrane. In terms of biological role, forms chloride channels. The protein is Bestrophin homolog 12 (best-12) of Caenorhabditis elegans.